A 503-amino-acid chain; its full sequence is Potassium voltage-gated channel subfamily V member 1 (503 aa).

2 disordered regions span residues Met-1–Ser-20 and Lys-171–Cys-192. Residues Leu-3–Arg-213 are Cytoplasmic-facing. Positions Leu-10–Ser-20 are enriched in low complexity. A compositionally biased stretch (basic and acidic residues) spans Lys-171–Glu-184. A helical membrane pass occupies residues Ile-214–Ser-234. Topologically, residues Ala-235–Asn-241 are extracellular. Residues Leu-242–Leu-262 traverse the membrane as a helical segment. The Cytoplasmic portion of the chain corresponds to Arg-263–Asn-279. A helical transmembrane segment spans residues Ile-280 to Gly-300. The Extracellular segment spans residues Ser-301–Arg-312. Residues Leu-313 to Gly-334 form a helical; Voltage-sensor membrane-spanning segment. Topologically, residues Leu-335–Glu-348 are cytoplasmic. The helical transmembrane segment at Val-349–Phe-369 threads the bilayer. The Selectivity filter motif lies at Thr-395–Asp-400. Residues Ile-410 to Ile-430 form a helical membrane-spanning segment. At Asn-431–Phe-503 the chain is on the cytoplasmic side.

This sequence belongs to the potassium channel family. V (TC 1.A.1.2) subfamily. Kv8.1/KCNV1 sub-subfamily. Heteromultimer with KCNB1 and KCNB2. Interacts with KCNC4 and KCND1. As to expression, detected in brain, in neocortex, olfactory tubercle, hippocampus, dentate gyrus, piriform cortex and amygdala. Detected in Purkinje cells and granular cells of the cerebellum, in hippocampal CA4 neurons and neocortex pyramidal cells.

The protein localises to the cell membrane. Its function is as follows. Potassium channel subunit that does not form functional channels by itself. Modulates KCNB1 and KCNB2 channel activity by shifting the threshold for inactivation to more negative values and by slowing the rate of inactivation. Can down-regulate the channel activity of KCNB1, KCNB2, KCNC4 and KCND1, possibly by trapping them in intracellular membranes. This is Potassium voltage-gated channel subfamily V member 1 (Kcnv1) from Rattus norvegicus (Rat).